We begin with the raw amino-acid sequence, 227 residues long: MQSFETLEKLLGYSFKNQELLIEALSHPSLRQHHEYKYDKDYERLEFLGDAVLNLVVTEILFRNFASYNEGNLAKIRSYLVCKETICVVGTKLTLKDYIIMTYGEEVAGGRDNPNNIENAMEALIAAIYLDSNIETTRNIIGKLWEEFIKIQNLTDYDPKTALQEWAQASSHHLPIYRLIKREGAAHSSTFTVLVKVKDYEQTGTGHSIKEAEKNAARDLLHRLQDV.

Positions 4-133 (FETLEKLLGY…LIAAIYLDSN (130 aa)) constitute an RNase III domain. E46 serves as a coordination point for Mg(2+). D50 is an active-site residue. Mg(2+) is bound by residues N119 and E122. E122 is a catalytic residue. The DRBM domain occupies 158–226 (DPKTALQEWA…ARDLLHRLQD (69 aa)).

The protein belongs to the ribonuclease III family. As to quaternary structure, homodimer. The cofactor is Mg(2+).

The protein localises to the cytoplasm. It carries out the reaction Endonucleolytic cleavage to 5'-phosphomonoester.. Its function is as follows. Digests double-stranded RNA. Involved in the processing of primary rRNA transcript to yield the immediate precursors to the large and small rRNAs (23S and 16S). Processes some mRNAs, and tRNAs when they are encoded in the rRNA operon. Processes pre-crRNA and tracrRNA of type II CRISPR loci if present in the organism. This is Ribonuclease 3 from Rickettsia akari (strain Hartford).